The chain runs to 496 residues: Zinc finger and SCAN domain-containing protein 5C (496 aa).

The segment covering Met1–Gly19 has biased composition (polar residues). Residues Met1–Ser38 form a disordered region. The 83-residue stretch at His44 to Lys126 folds into the SCAN box domain. Disordered stretches follow at residues Glu149–Arg188 and Pro203–Gly347. Polar residues predominate over residues Val161–Gln171. Residues Gly210 to Lys223 are compositionally biased toward basic and acidic residues. The span at Gly234–Thr247 shows a compositional bias: polar residues. Residues Lys253–Ser263 are compositionally biased toward basic and acidic residues. C2H2-type zinc fingers lie at residues Phe356 to His378, Phe384 to His406, Tyr412 to His434, Phe440 to His462, and His468 to His490.

The protein localises to the nucleus. In terms of biological role, may be involved in transcriptional regulation. This is Zinc finger and SCAN domain-containing protein 5C from Homo sapiens (Human).